A 209-amino-acid polypeptide reads, in one-letter code: Kunitz trypsin inhibitor 1 (209 aa).

A signal peptide spans 1-22 (MKATISITTIFLVVALAAPSLA). Disulfide bonds link Cys-63-Cys-107 and Cys-154-Cys-162. Asn-156 carries an N-linked (GlcNAc...) asparagine glycan.

This sequence belongs to the protease inhibitor I3 (leguminous Kunitz-type inhibitor) family.

Its function is as follows. Exhibits Kunitz trypsin protease inhibitor activity. This chain is Kunitz trypsin inhibitor 1, found in Arabidopsis thaliana (Mouse-ear cress).